Here is a 570-residue protein sequence, read N- to C-terminus: Interleukin-1 receptor accessory protein (570 aa).

The signal sequence occupies residues 1–20 (MTLLWCVVSLYFYGILQSDA). 3 consecutive Ig-like C2-type domains span residues 21 to 128 (SERC…VAFP), 141 to 230 (PMKL…RTLT), and 242 to 348 (PPVI…AKVK). The Extracellular segment spans residues 21-367 (SERCDDWGLD…VELACGFGAT (347 aa)). Disulfide bonds link cysteine 24–cysteine 122, cysteine 47–cysteine 114, cysteine 137–cysteine 181, cysteine 160–cysteine 212, and cysteine 266–cysteine 332. A glycan (N-linked (GlcNAc...) asparagine) is linked at asparagine 57. The essential for interaction with PTPRD stretch occupies residues 69–85 (IWYWTRQDRDLEEPINF). Residues asparagine 107, asparagine 111, and asparagine 118 are each glycosylated (N-linked (GlcNAc...) asparagine). N-linked (GlcNAc...) asparagine glycosylation is found at asparagine 196, asparagine 209, and asparagine 299. A helical transmembrane segment spans residues 368–388 (VLLVVILIVVYHVYWLEMVLF). Topologically, residues 389–570 (YRAHFGTDET…GLSYSSLKNV (182 aa)) are cytoplasmic. A TIR domain is found at 403–546 (KEYDIYVSYA…RFWKQLQVAM (144 aa)). Glutamate 482 is a catalytic residue. The tract at residues 549–570 (KKSPRRSSSDEQGLSYSSLKNV) is disordered. Serine 557 carries the phosphoserine modification. The segment covering 558 to 570 (DEQGLSYSSLKNV) has biased composition (polar residues).

It belongs to the interleukin-1 receptor family. As to quaternary structure, the interleukin-36 receptor complex is a heterodimer of IL1RL2 and IL1RAP; the association is inhibited by IL36RN. The interleukin-1 receptor complex is a heterodimer of IL1R1 and IL1RAP. Associates with IL1R2 to form a non-signaling interleukin-1 receptor complex. Isoform 4 interacts with IL1R1 in an interleukin-1-dependent manner. Interacts with IL-33-bound IL1RL1 to form the minimal interleukin-33 signaling complex with a 1:1:1 stoichiometry. Interacts with KIT (independently of stimulation with KITLG/SCF). A mast cell-specific KITLG/SCF-induced interleukin-33 signaling complex contains IL1RL1, IL1RAP, KIT and MYD88. Interacts (via the first immunoglobilin domain) with PTPRD (via the third immunoglobilin domain); induces pre- and postsynaptic differentiation of neurons. Detected in liver, skin, placenta, thymus and lung. Isoform 4 is predominantly expressed in brain. Overexpressed on candidate chronic myeloid leukemia (CML) stem cells, hematopoietic stem cells and mononuclear cells of patients with acute myeloid leukemia (AML). Overexpressed in patients with chronic obstructive pulmonary disease (COPD). Expressed in T-helper 1 (Th1) and T-helper 2 (Th2) cell subsets.

The protein resides in the cell membrane. The protein localises to the secreted. It catalyses the reaction NAD(+) + H2O = ADP-D-ribose + nicotinamide + H(+). Its function is as follows. Coreceptor for IL1RL2 in the IL-36 signaling system. Coreceptor with IL1R1 in the IL-1 signaling system. Associates with IL1R1 bound to IL1B to form the high affinity interleukin-1 receptor complex which mediates interleukin-1-dependent activation of NF-kappa-B and other pathways. Signaling involves the recruitment of adapter molecules such as TOLLIP, MYD88, and IRAK1 or IRAK2 via the respective TIR domains of the receptor/coreceptor subunits. Recruits TOLLIP to the signaling complex. Does not bind to interleukin-1 alone; binding of IL1RN to IL1R1, prevents its association with IL1R1 to form a signaling complex. The cellular response is modulated through a non-signaling association with the membrane IL1R2 decoy receptor. Coreceptor for IL1RL1 in the IL-33 signaling system. Can bidirectionally induce pre- and postsynaptic differentiation of neurons by trans-synaptically binding to PTPRD. May play a role in IL1B-mediated costimulation of IFNG production from T-helper 1 (Th1) cells. Associates with secreted ligand-bound IL1R2 and increases the affinity of secreted IL1R2 for IL1B; this complex formation may be the dominant mechanism for neutralization of IL1B by secreted/soluble receptors. Enhances the ability of secreted IL1R1 to inhibit IL-33 signaling. Functionally, unable to mediate canonical IL-1 signaling. Required for Src phosphorylation by IL1B. May be involved in IL1B-potentiated NMDA-induced calcium influx in neurons. The chain is Interleukin-1 receptor accessory protein (IL1RAP) from Homo sapiens (Human).